We begin with the raw amino-acid sequence, 383 residues long: Probable transcriptional repressor C1348.12 (383 aa).

Residues 34 to 60 constitute a DNA-binding region (zn(2)-C6 fungal-type); sequence CVICRSKKQKCDGQLPCLYCKKYEYQC.

Its subcellular location is the nucleus. Functionally, probable transcriptional repressor of multidrug resistance genes. This is Probable transcriptional repressor C1348.12 from Schizosaccharomyces pombe (strain 972 / ATCC 24843) (Fission yeast).